Here is a 1059-residue protein sequence, read N- to C-terminus: Translation initiation factor IF-2 (1059 aa).

Polar residues-rich tracts occupy residues 55-75 (LPHSPSLSAAPEKSNSQNQDS) and 107-126 (KINNNLVTTPPNTSVLNNQV). Disordered regions lie at residues 55–81 (LPHSPSLSAAPEKSNSQNQDSGIGYNE), 93–394 (PKPL…RLRL), and 418–468 (SLSL…QSAE). The span at 178 to 187 (DSNEKSKVEV) shows a compositional bias: basic and acidic residues. Polar residues predominate over residues 202-211 (LNRNLRNTGV). Over residues 216-229 (QKNKKPKQEGKKRK) the composition is skewed to basic residues. Composition is skewed to basic and acidic residues over residues 230–252 (DKEEKPFEKPAIVSKKENKDTSI) and 259–273 (SKKENKDTFQNRESV). Polar residues predominate over residues 274–284 (KTSASDTSSQL). 2 stretches are compositionally biased toward basic and acidic residues: residues 291–300 (KPTVKLKQEQ) and 359–368 (LTKDKKVSKW). The span at 452–463 (SHESVQSESNEQ) shows a compositional bias: low complexity. One can recognise a tr-type G domain in the interval 556–733 (RRPPVVTIMG…EVEDLQANPE (178 aa)). The tract at residues 565-572 (GHVDHGKT) is G1. 565-572 (GHVDHGKT) contacts GTP. Residues 590–594 (GITQH) are G2. The segment at 615–618 (DTPG) is G3. GTP contacts are provided by residues 615 to 619 (DTPGH) and 669 to 672 (NKID). The segment at 669 to 672 (NKID) is G4. The segment at 705–707 (SAI) is G5.

This sequence belongs to the TRAFAC class translation factor GTPase superfamily. Classic translation factor GTPase family. IF-2 subfamily.

Its subcellular location is the cytoplasm. One of the essential components for the initiation of protein synthesis. Protects formylmethionyl-tRNA from spontaneous hydrolysis and promotes its binding to the 30S ribosomal subunits. Also involved in the hydrolysis of GTP during the formation of the 70S ribosomal complex. The sequence is that of Translation initiation factor IF-2 from Trichodesmium erythraeum (strain IMS101).